A 166-amino-acid polypeptide reads, in one-letter code: NAD(P)H-quinone oxidoreductase subunit I, chloroplastic (166 aa).

2 consecutive 4Fe-4S ferredoxin-type domains span residues 55-84 (GRIHFEFDKCIACEVCVRVCPIDLPVVDWK) and 95-124 (LNYSIDFGICIFCGHCVEYCPTNCLSMTEE). Residues Cys-64, Cys-67, Cys-70, Cys-74, Cys-104, Cys-107, Cys-110, and Cys-114 each coordinate [4Fe-4S] cluster.

Belongs to the complex I 23 kDa subunit family. As to quaternary structure, NDH is composed of at least 16 different subunits, 5 of which are encoded in the nucleus. [4Fe-4S] cluster is required as a cofactor.

The protein localises to the plastid. The protein resides in the chloroplast thylakoid membrane. The enzyme catalyses a plastoquinone + NADH + (n+1) H(+)(in) = a plastoquinol + NAD(+) + n H(+)(out). It carries out the reaction a plastoquinone + NADPH + (n+1) H(+)(in) = a plastoquinol + NADP(+) + n H(+)(out). In terms of biological role, NDH shuttles electrons from NAD(P)H:plastoquinone, via FMN and iron-sulfur (Fe-S) centers, to quinones in the photosynthetic chain and possibly in a chloroplast respiratory chain. The immediate electron acceptor for the enzyme in this species is believed to be plastoquinone. Couples the redox reaction to proton translocation, and thus conserves the redox energy in a proton gradient. This chain is NAD(P)H-quinone oxidoreductase subunit I, chloroplastic, found in Perymeniopsis ovalifolia.